A 28-amino-acid chain; its full sequence is Cycloviolin-B (28 aa).

The segment at residues 1–28 is a cross-link (cyclopeptide (Gly-Asn)); sequence GTACGESCYVLPCFTVGCTCTSSQCFKN. 3 disulfide bridges follow: Cys4–Cys18, Cys8–Cys20, and Cys13–Cys25.

This is a cyclic peptide.

Probably participates in a plant defense mechanism. Has anti-HIV activity. This is Cycloviolin-B from Leonia cymosa (Sacha uba).